Here is a 577-residue protein sequence, read N- to C-terminus: MVQSAPASEIAALILRGFDDYREQFREITDGARARFEQAQWQEAQRASAQRINLYEEKVAETVAGLRAGLADSELLDVERWPIIKSAYIAQIDLRLDDELAETWFNSIFCGLFSHDNISDGTMFVHTTRPSLRAHARAPYTRTYRPGGDLRQALEKIFDDYRFDVPYDDRERDLERIDALLHSNLPDWVCKDPDLAIELIGSVFYRNKGAYLVGRLFTPDEQWPLVFPLLHREDHGIQFDTVITDEAEVSIIFSFTRSYFMVDVPVPAELVAFLKRLLPGKHLAELYTSIGFYKQGKSEFYRALINHLATTDDRFVMAPGVRGMVMSVFTLPGFNTVFKIIKDRFNPSKSVDHATVIQKYQLVKNHDRVGRLADTQQFADFRFPVSKFEPECLAELLEVAPSTVVMEGDVVLIRHCWTERRMTPLNIYLENASEAQTREALNDYGLAIKQLAAANIFPGDMLLKNFGVTRHGRVVFYDYDEICYLTEVNFRYIPEPRFPEDEMSSEPWYSVGPNDVFPEEFPRFLFVDLNQRRLFAKLHGNLYDAKYWQGLQEQIREGKVIDVFPYRRQETPEQLLG.

ATP-binding positions include 318 to 324 (APGVRGM) and Lys339. Residue Asp374 is part of the active site.

Belongs to the AceK family.

The protein resides in the cytoplasm. The catalysed reaction is L-seryl-[isocitrate dehydrogenase] + ATP = O-phospho-L-seryl-[isocitrate dehydrogenase] + ADP + H(+). Its function is as follows. Bifunctional enzyme which can phosphorylate or dephosphorylate isocitrate dehydrogenase (IDH) on a specific serine residue. This is a regulatory mechanism which enables bacteria to bypass the Krebs cycle via the glyoxylate shunt in response to the source of carbon. When bacteria are grown on glucose, IDH is fully active and unphosphorylated, but when grown on acetate or ethanol, the activity of IDH declines drastically concomitant with its phosphorylation. The chain is Isocitrate dehydrogenase kinase/phosphatase from Pseudomonas aeruginosa (strain ATCC 15692 / DSM 22644 / CIP 104116 / JCM 14847 / LMG 12228 / 1C / PRS 101 / PAO1).